The primary structure comprises 1167 residues: RNA-directed RNA polymerase (1167 aa).

One can recognise a RdRp catalytic domain in the interval 553-735 (LTYGILAEAT…KALASYTGLE (183 aa)).

It belongs to the reoviridae RNA-directed RNA polymerase family. In terms of assembly, interacts with VP3 (Potential). Interacts with VP2 (Potential). Interacts with NSP5; this interaction is probably necessary for the formation of functional virus factories.

The protein localises to the virion. It carries out the reaction RNA(n) + a ribonucleoside 5'-triphosphate = RNA(n+1) + diphosphate. Functionally, RNA-directed RNA polymerase that is involved in both transcription and genome replication. Together with VP3 capping enzyme, forms an enzyme complex positioned near the channels situated at each of the five-fold vertices of the core. Following infection, the outermost layer of the virus is lost, leaving a double-layered particle (DLP) made up of the core and VP6 shell. VP1 then catalyzes the transcription of fully conservative plus-strand genomic RNAs that are extruded through the DLP's channels into the cytoplasm where they function as mRNAs for translation of viral proteins. One copy of each of the viral (+)RNAs is also recruited during core assembly, together with newly synthesized polymerase complexes and VP2. The polymerase of these novo-formed particles catalyzes the synthesis of complementary minus-strands leading to dsDNA formation. To do so, the polymerase specifically recognizes conserved 3' sequence(s) in plus-strand RNA templates. Once dsRNA synthesis is complete, the polymerase switches to the transcriptional mode, thus providing secondary transcription. This is RNA-directed RNA polymerase from Rotavirus X (isolate RVX/Human/Bangladesh/NADRV-B219/2002/GXP[X]) (RV ADRV-N).